The primary structure comprises 322 residues: Phosphatidylserine decarboxylase proenzyme (322 aa).

Residues aspartate 90, histidine 147, and serine 254 each act as charge relay system; for autoendoproteolytic cleavage activity in the active site. Serine 254 functions as the Schiff-base intermediate with substrate; via pyruvic acid; for decarboxylase activity in the catalytic mechanism. Serine 254 carries the post-translational modification Pyruvic acid (Ser); by autocatalysis. A disordered region spans residues 293 to 322 (PDAEPAPLPAEEIEAEHDASPLIDDKKDQV). Residues 308 to 322 (EHDASPLIDDKKDQV) are compositionally biased toward basic and acidic residues.

The protein belongs to the phosphatidylserine decarboxylase family. PSD-B subfamily. Prokaryotic type I sub-subfamily. Heterodimer of a large membrane-associated beta subunit and a small pyruvoyl-containing alpha subunit. Pyruvate serves as cofactor. Is synthesized initially as an inactive proenzyme. Formation of the active enzyme involves a self-maturation process in which the active site pyruvoyl group is generated from an internal serine residue via an autocatalytic post-translational modification. Two non-identical subunits are generated from the proenzyme in this reaction, and the pyruvate is formed at the N-terminus of the alpha chain, which is derived from the carboxyl end of the proenzyme. The autoendoproteolytic cleavage occurs by a canonical serine protease mechanism, in which the side chain hydroxyl group of the serine supplies its oxygen atom to form the C-terminus of the beta chain, while the remainder of the serine residue undergoes an oxidative deamination to produce ammonia and the pyruvoyl prosthetic group on the alpha chain. During this reaction, the Ser that is part of the protease active site of the proenzyme becomes the pyruvoyl prosthetic group, which constitutes an essential element of the active site of the mature decarboxylase.

The protein localises to the cell membrane. It carries out the reaction a 1,2-diacyl-sn-glycero-3-phospho-L-serine + H(+) = a 1,2-diacyl-sn-glycero-3-phosphoethanolamine + CO2. Its pathway is phospholipid metabolism; phosphatidylethanolamine biosynthesis; phosphatidylethanolamine from CDP-diacylglycerol: step 2/2. Functionally, catalyzes the formation of phosphatidylethanolamine (PtdEtn) from phosphatidylserine (PtdSer). The chain is Phosphatidylserine decarboxylase proenzyme from Escherichia coli O127:H6 (strain E2348/69 / EPEC).